A 400-amino-acid chain; its full sequence is Serine/threonine transporter SstT (400 aa).

A run of 9 helical transmembrane segments spans residues isoleucine 14 to tyrosine 34, serine 48 to glycine 68, valine 76 to leucine 96, alanine 136 to methionine 156, isoleucine 177 to phenylalanine 197, leucine 211 to valine 231, isoleucine 285 to leucine 305, leucine 311 to alanine 331, and cysteine 349 to valine 371.

This sequence belongs to the dicarboxylate/amino acid:cation symporter (DAACS) (TC 2.A.23) family.

The protein resides in the cell inner membrane. The enzyme catalyses L-serine(in) + Na(+)(in) = L-serine(out) + Na(+)(out). It carries out the reaction L-threonine(in) + Na(+)(in) = L-threonine(out) + Na(+)(out). Functionally, involved in the import of serine and threonine into the cell, with the concomitant import of sodium (symport system). The polypeptide is Serine/threonine transporter SstT (Acinetobacter baumannii (strain AB307-0294)).